Here is an 87-residue protein sequence, read N- to C-terminus: MDQLNGKEQQEFQKIVEQKQMKDFMRLYSNLVERCFSDCVNDFTSAKLTSKEQNCIMRCSEKFLKHSERVGQRFQEQNAAMNQTMGR.

Positions 35-59 match the Twin CX3C motif motif; that stretch reads CFSDCVNDFTSAKLTSKEQNCIMRC. Disulfide bonds link Cys35/Cys59 and Cys39/Cys55.

It belongs to the small Tim family. In terms of assembly, heterohexamer; composed of 3 copies of TIM9 and 3 copies of TIM10, named soluble 70 kDa complex. Associates with the TIM22 complex, whose core is composed of TIM22 and TIM54. Interacts with the transmembrane regions of multi-pass transmembrane proteins in transit.

The protein localises to the mitochondrion inner membrane. Functionally, mitochondrial intermembrane chaperone that participates in the import and insertion of multi-pass transmembrane proteins into the mitochondrial inner membrane. Also required for the transfer of beta-barrel precursors from the TOM complex to the sorting and assembly machinery (SAM complex) of the outer membrane. Acts as a chaperone-like protein that protects the hydrophobic precursors from aggregation and guide them through the mitochondrial intermembrane space. The polypeptide is Mitochondrial import inner membrane translocase subunit TIM9 (TIM9) (Kluyveromyces lactis (strain ATCC 8585 / CBS 2359 / DSM 70799 / NBRC 1267 / NRRL Y-1140 / WM37) (Yeast)).